Reading from the N-terminus, the 116-residue chain is Venom protein 54.1 (116 aa).

The N-terminal stretch at 1–19 is a signal peptide; it reads MNFQVFSLIFFNFVYYCSC.

In terms of processing, contains 3 disulfide bonds. In terms of tissue distribution, expressed by the venom gland.

It is found in the secreted. The polypeptide is Venom protein 54.1 (Lychas mucronatus (Chinese swimming scorpion)).